The chain runs to 156 residues: ATP synthase subunit b (156 aa).

A helical transmembrane segment spans residues L7–P27.

This sequence belongs to the ATPase B chain family. F-type ATPases have 2 components, F(1) - the catalytic core - and F(0) - the membrane proton channel. F(1) has five subunits: alpha(3), beta(3), gamma(1), delta(1), epsilon(1). F(0) has three main subunits: a(1), b(2) and c(10-14). The alpha and beta chains form an alternating ring which encloses part of the gamma chain. F(1) is attached to F(0) by a central stalk formed by the gamma and epsilon chains, while a peripheral stalk is formed by the delta and b chains.

The protein localises to the cell inner membrane. In terms of biological role, f(1)F(0) ATP synthase produces ATP from ADP in the presence of a proton or sodium gradient. F-type ATPases consist of two structural domains, F(1) containing the extramembraneous catalytic core and F(0) containing the membrane proton channel, linked together by a central stalk and a peripheral stalk. During catalysis, ATP synthesis in the catalytic domain of F(1) is coupled via a rotary mechanism of the central stalk subunits to proton translocation. Its function is as follows. Component of the F(0) channel, it forms part of the peripheral stalk, linking F(1) to F(0). The sequence is that of ATP synthase subunit b from Ralstonia pickettii (strain 12J).